Here is a 94-residue protein sequence, read N- to C-terminus: Small ribosomal subunit protein uS19 (94 aa).

Belongs to the universal ribosomal protein uS19 family.

Protein S19 forms a complex with S13 that binds strongly to the 16S ribosomal RNA. This Clostridium botulinum (strain Hall / ATCC 3502 / NCTC 13319 / Type A) protein is Small ribosomal subunit protein uS19.